The chain runs to 465 residues: Mothers against decapentaplegic homolog 1 (465 aa).

An N-acetylmethionine modification is found at methionine 1. In terms of domain architecture, MH1 spans 12–136 (PAVKRLLGWK…YKRVESPVLP (125 aa)). Zn(2+)-binding residues include cysteine 64, cysteine 109, cysteine 121, and histidine 126. The segment at 162-248 (NEPHMPLNAT…SQPMDTNMMA (87 aa)) is disordered. The segment covering 179-210 (PNSHPFPHSPNSSYPNSPGSSSSTYPHSPTSS) has biased composition (low complexity). Positions 221-232 (DTPPPAYLPPED) are enriched in pro residues. The MH2 domain occupies 271 to 465 (WCSIVYYELN…SPHNPISSVS (195 aa)). Threonine 322 carries the post-translational modification Phosphothreonine; by MINK1, TNIK and MAP4K4. The segment at 418 to 428 (KGWGAEYHRQD) is L3 loop. Phosphoserine occurs at positions 463 and 465.

This sequence belongs to the dwarfin/SMAD family. As to quaternary structure, found in a complex with SMAD4 and YY1. Interacts with HGS, NANOG and ZCCHC12. Upon C-terminus phosphorylation: forms trimers with another SMAD1 and the co-SMAD SMAD4. Interacts with PEBP2-alpha subunit, CREB-binding protein (CBP), p300, SMURF1, SMURF2, USP15 and HOXC8. Associates with ZNF423 or ZNF521 in response to BMP2 leading to activate transcription of BMP target genes. Interacts with SKOR1. Interacts (via MH2 domain) with LEMD3. Binding to LEMD3 results in at least a partial reduction of receptor-mediated phosphorylation. Forms a ternary complex with PSMB4 and OAZ1 before PSMB4 is incorporated into the 20S proteasome. Interacts (via MH2 domain) with FAM83G (via MH2 domain); in a SMAD4-independent manner. Interacts with ZC3H3. Interacts with TMEM119. Interacts (via MH1 and MH2 domains) with ZNF8. Interacts with RANBP3L; the interaction increases when SMAD1 is not phosphorylated and mediates SMAD1 nuclear export. Interacts with EGR1; this interaction inhibits SMAD1 dephosphorylation. Interacts with SMAD6. Interacts with YAP1. Interacts with MTMR4; negatively regulates BMP signaling through SMAD1 dephosphorylation and retention in endosomes. Phosphorylation of the C-terminal SVS motif by BMP type 1 receptor kinase activates SMAD1 by promoting dissociation from the receptor and trimerization with SMAD4. Phosphorylation by ERK2 MAP kinase in response to EGF or HGF prevents SMAD1 nuclear accumulation and transcriptional activity in response to BMP. Dephosphorylation, probably by PPM1A, induces its export from the nucleus to the cytoplasm. Dephosphorylation is inhibited by association with EGR1. Phosphorylation by CDK8/9 creates binding sites for YAP1, and subsequent phosphorylation by GSK3 switches off YAP1 binding and adds binding sites for SMURF1. In terms of processing, ubiquitinated by SMAD-specific E3 ubiquitin ligase SMURF1, leading to its degradation. Monoubiquitinated, leading to prevent DNA-binding. Deubiquitination by USP15 alleviates inhibition and promotes activation of TGF-beta target genes. Dephosphorylation, probably by PPM1A, induces its export from the nucleus to the cytoplasm. Phospho-SMAD1 is ubiquitinated by CHIP leading to disruption of the SMAD1-SMAD4 complex. Ubiquitous. Highest expression seen in the heart and skeletal muscle.

It localises to the cytoplasm. It is found in the nucleus. Transcriptional modulator that plays a role in various cellular processes, including embryonic development, cell differentiation, and tissue homeostasis. Upon BMP ligand binding to their receptors at the cell surface, is phosphorylated by activated type I BMP receptors (BMPRIs) and associates with SMAD4 to form a heteromeric complex which translocates into the nucleus acting as transcription factor. In turn, the hetero-trimeric complex recognizes cis-regulatory elements containing Smad Binding Elements (SBEs) to modulate the outcome of the signaling network. SMAD1/OAZ1/PSMB4 complex mediates the degradation of the CREBBP/EP300 repressor SNIP1. Positively regulates BMP4-induced expression of odontogenic development regulator MSX1 following IPO7-mediated nuclear import. This Homo sapiens (Human) protein is Mothers against decapentaplegic homolog 1 (SMAD1).